We begin with the raw amino-acid sequence, 226 residues long: 3-dehydroquinate dehydratase (226 aa).

3-dehydroquinate is bound by residues 33–35 (ELR) and arginine 65. The active-site Proton donor/acceptor is the histidine 120. The Schiff-base intermediate with substrate role is filled by lysine 147. 3-dehydroquinate is bound by residues arginine 186, serine 205, and glutamine 209.

It belongs to the type-I 3-dehydroquinase family. Homodimer.

The catalysed reaction is 3-dehydroquinate = 3-dehydroshikimate + H2O. The protein operates within metabolic intermediate biosynthesis; chorismate biosynthesis; chorismate from D-erythrose 4-phosphate and phosphoenolpyruvate: step 3/7. Involved in the third step of the chorismate pathway, which leads to the biosynthesis of aromatic amino acids. Catalyzes the cis-dehydration of 3-dehydroquinate (DHQ) and introduces the first double bond of the aromatic ring to yield 3-dehydroshikimate. The chain is 3-dehydroquinate dehydratase from Thermodesulfovibrio yellowstonii (strain ATCC 51303 / DSM 11347 / YP87).